Here is a 94-residue protein sequence, read N- to C-terminus: Large ribosomal subunit protein bL27 (94 aa).

Residues 1–9 (MLRLDLQFF) constitute a propeptide that is removed on maturation.

It belongs to the bacterial ribosomal protein bL27 family. Part of the 50S ribosomal subunit. The N-terminus is cleaved by ribosomal processing cysteine protease Prp.

Plays a role in sporulation at high temperatures. This chain is Large ribosomal subunit protein bL27 (rpmA), found in Bacillus subtilis (strain 168).